The following is a 392-amino-acid chain: Meiotically up-regulated gene 11 protein (392 aa).

It is found in the cytoplasm. It localises to the nucleus. Has a role in meiosis. The sequence is that of Meiotically up-regulated gene 11 protein (mug11) from Schizosaccharomyces pombe (strain 972 / ATCC 24843) (Fission yeast).